We begin with the raw amino-acid sequence, 320 residues long: Nucleotide-binding protein Pcryo_0127 (320 aa).

An ATP-binding site is contributed by G32 to T39. GTP is bound at residue D82–T85.

The protein belongs to the RapZ-like family.

Displays ATPase and GTPase activities. In Psychrobacter cryohalolentis (strain ATCC BAA-1226 / DSM 17306 / VKM B-2378 / K5), this protein is Nucleotide-binding protein Pcryo_0127.